Here is a 344-residue protein sequence, read N- to C-terminus: Tetraacyldisaccharide 4'-kinase (344 aa).

ATP is bound at residue 65-72 (HAGGTGKT).

The protein belongs to the LpxK family.

It carries out the reaction a lipid A disaccharide + ATP = a lipid IVA + ADP + H(+). It functions in the pathway glycolipid biosynthesis; lipid IV(A) biosynthesis; lipid IV(A) from (3R)-3-hydroxytetradecanoyl-[acyl-carrier-protein] and UDP-N-acetyl-alpha-D-glucosamine: step 6/6. Its function is as follows. Transfers the gamma-phosphate of ATP to the 4'-position of a tetraacyldisaccharide 1-phosphate intermediate (termed DS-1-P) to form tetraacyldisaccharide 1,4'-bis-phosphate (lipid IVA). The polypeptide is Tetraacyldisaccharide 4'-kinase (Neisseria meningitidis serogroup B (strain ATCC BAA-335 / MC58)).